Consider the following 89-residue polypeptide: Prostaglandin E2 receptor EP3 subtype (89 aa).

The chain crosses the membrane as a helical span at residues 1–18 (GVWLAVLAFALLPVLGVG). Topologically, residues 19–48 (QYTIQWPGTWCFISTGPGGNGTNSRQNWGN) are extracellular. Asn-38 carries N-linked (GlcNAc...) asparagine glycosylation. Residues 49 to 74 (VFFASDFAILGLSALVVTFACNLATI) traverse the membrane as a helical segment. At 75 to 89 (KALVSRCRAKATASQ) the chain is on the cytoplasmic side.

It belongs to the G-protein coupled receptor 1 family. Interacts (via C-terminus) with MKLN1.

It localises to the cell membrane. Its function is as follows. Receptor for prostaglandin E2 (PGE2). Required for normal development of fever in response to pyrinogens, including IL1B, prostaglandin E2 and bacterial lipopolysaccharide (LPS). Required for normal potentiation of platelet aggregation by prostaglandin E2, and thus plays a role in the regulation of blood coagulation. Required for increased HCO3(-) secretion in the duodenum in response to mucosal acidification, and thereby contributes to the protection of the mucosa against acid-induced ulceration. Not required for normal kidney function, normal urine volume and osmolality. In Ovis aries (Sheep), this protein is Prostaglandin E2 receptor EP3 subtype (PTGER3).